The primary structure comprises 145 residues: Ribosome maturation factor RimP (145 aa).

It belongs to the RimP family.

It localises to the cytoplasm. In terms of biological role, required for maturation of 30S ribosomal subunits. The protein is Ribosome maturation factor RimP of Borreliella afzelii (strain PKo) (Borrelia afzelii).